The chain runs to 550 residues: Mitochondrial distribution and morphology protein 12 (550 aa).

One can recognise an SMP-LTD domain in the interval 1–550; the sequence is MSIDLNWETV…VYPSYWTFLV (550 aa). Disordered regions lie at residues 76–97, 196–386, and 466–489; these read SDLA…DRRR, GHGH…KLRE, and ENEV…GGNG. The span at 83-92 shows a compositional bias: acidic residues; it reads GSEEDEEEIA. Positions 270–286 are enriched in pro residues; it reads PPFPPSSTGGPSPPPGL. Basic residues predominate over residues 288 to 305; it reads KPHHPHHPHHHHAHHAHP. Basic and acidic residues predominate over residues 327–344; that stretch reads PTRDKTTPSHHPDPEDVH. The segment covering 346 to 355 has biased composition (polar residues); sequence PNTTTTNKQR. Residues 356–371 are compositionally biased toward low complexity; that stretch reads STSPATSSPLATSAQE.

It belongs to the MDM12 family. Component of the ER-mitochondria encounter structure (ERMES) or MDM complex, composed of MMM1, MDM10, MDM12 and MDM34. An MMM1 homodimer associates with one molecule of MDM12 on each side in a pairwise head-to-tail manner, and the SMP-LTD domains of MMM1 and MDM12 generate a continuous hydrophobic tunnel for phospholipid trafficking.

It is found in the mitochondrion outer membrane. The protein localises to the endoplasmic reticulum membrane. Its function is as follows. Component of the ERMES/MDM complex, which serves as a molecular tether to connect the endoplasmic reticulum (ER) and mitochondria. Components of this complex are involved in the control of mitochondrial shape and protein biogenesis, and function in nonvesicular lipid trafficking between the ER and mitochondria. MDM12 is required for the interaction of the ER-resident membrane protein MMM1 and the outer mitochondrial membrane-resident beta-barrel protein MDM10. The MDM12-MMM1 subcomplex functions in the major beta-barrel assembly pathway that is responsible for biogenesis of all mitochondrial outer membrane beta-barrel proteins, and acts in a late step after the SAM complex. The MDM10-MDM12-MMM1 subcomplex further acts in the TOM40-specific pathway after the action of the MDM12-MMM1 complex. Essential for establishing and maintaining the structure of mitochondria and maintenance of mtDNA nucleoids. This chain is Mitochondrial distribution and morphology protein 12, found in Podospora anserina (strain S / ATCC MYA-4624 / DSM 980 / FGSC 10383) (Pleurage anserina).